We begin with the raw amino-acid sequence, 59 residues long: Putative HTH-type transcriptional regulator YneL (59 aa).

The 59-residue stretch at 1–59 (MSPLRYQKWLRLNEVRRQMLNEHYDVTTAAYAVGYESYPISVGNIRGCLESHPREILPG) folds into the HTH araC/xylS-type domain. A DNA-binding region (H-T-H motif) is located at residues 26 to 49 (VTTAAYAVGYESYPISVGNIRGCL).

The polypeptide is Putative HTH-type transcriptional regulator YneL (yneL) (Escherichia coli (strain K12)).